A 206-amino-acid chain; its full sequence is MSLRRRTLLKVIVLGDSGVGKTSLMNQYVHKKFSQQYKATIGADFVTKELQIDDRLVTLQIWDTAGQERFQSLGVAFYRGADCCVLVYDVNVMKSFDTLENWHEEFLKQANPPDPRAFPFILLGNKIDIDGGNSRVVSEKKAKDWCAAKGNIPYFETSAKEDYNVDAAFLCIAKAALANEHEQDIYFQGIPEAAVPENEQRSGCAC.

GTP is bound by residues 15-22 (GDSGVGKT), 63-67 (DTAGQ), and 125-128 (NKID). Residues Cys204 and Cys206 are each lipidated (S-geranylgeranyl cysteine). At Cys206 the chain carries Cysteine methyl ester.

This sequence belongs to the small GTPase superfamily. Rab family.

The protein resides in the cell membrane. Protein transport. Probably involved in vesicular traffic. The chain is Ras-related protein Rab7 from Glycine max (Soybean).